The primary structure comprises 349 residues: DNA replication and repair protein RecF (349 aa).

30–37 is an ATP binding site; that stretch reads GKNGSGKT.

Belongs to the RecF family.

The protein resides in the cytoplasm. The RecF protein is involved in DNA metabolism; it is required for DNA replication and normal SOS inducibility. RecF binds preferentially to single-stranded, linear DNA. It also seems to bind ATP. This chain is DNA replication and repair protein RecF, found in Francisella tularensis subsp. tularensis (strain FSC 198).